We begin with the raw amino-acid sequence, 506 residues long: Kynureninase 1 (506 aa).

Pyridoxal 5'-phosphate contacts are provided by residues L141, T142, 169–172 (FPSD), D254, H257, and Y279. N6-(pyridoxal phosphate)lysine is present on K280. Residues 303 to 319 (ETAPTTTPDGTNGNPKT) are compositionally biased toward low complexity. Residues 303–322 (ETAPTTTPDGTNGNPKTISD) form a disordered region. Pyridoxal 5'-phosphate-binding residues include W334 and N362.

This sequence belongs to the kynureninase family. As to quaternary structure, homodimer. Pyridoxal 5'-phosphate serves as cofactor.

It is found in the cytoplasm. The catalysed reaction is L-kynurenine + H2O = anthranilate + L-alanine + H(+). It catalyses the reaction 3-hydroxy-L-kynurenine + H2O = 3-hydroxyanthranilate + L-alanine + H(+). The protein operates within amino-acid degradation; L-kynurenine degradation; L-alanine and anthranilate from L-kynurenine: step 1/1. Its pathway is cofactor biosynthesis; NAD(+) biosynthesis; quinolinate from L-kynurenine: step 2/3. Functionally, catalyzes the cleavage of L-kynurenine (L-Kyn) and L-3-hydroxykynurenine (L-3OHKyn) into anthranilic acid (AA) and 3-hydroxyanthranilic acid (3-OHAA), respectively. This Phaeosphaeria nodorum (strain SN15 / ATCC MYA-4574 / FGSC 10173) (Glume blotch fungus) protein is Kynureninase 1.